Reading from the N-terminus, the 187-residue chain is Homeobox expressed in ES cells 1-B (187 aa).

The homeobox DNA-binding region spans 110–169; the sequence is GRRPRTAFTRSQIEILENVFRVNSYPGIDVREELASKLALDEDRIQIWFQNRRAKLKRSH.

Belongs to the ANF homeobox family. In terms of assembly, the N-terminus interacts with the LIM 2 domain of zyx. First expressed at a low level in the late blastula stage (stage 9) in most cells of the animal half of the embryo. Following this, predominantly expressed in two zones; the dorsal blastopore lip (Spemann organizer) at the beginning of gastrulation, and subsequently in the anterior part of the neural anlage (the region of future forebrain).

The protein resides in the nucleus. Regulates the earliest stages of development of the anterior neural plate. Plays a role in forebrain development by inhibiting the expression of otx2 and pax6 in the rostral region of the anterior neural plate. Necessary for both neural differentiation and neural patterning. Controls Spemann organizer development. May act as a transcriptional repressor. This chain is Homeobox expressed in ES cells 1-B (hesx1-b), found in Xenopus laevis (African clawed frog).